Consider the following 321-residue polypeptide: Lipoyl synthase (321 aa).

The [4Fe-4S] cluster site is built by Cys-68, Cys-73, Cys-79, Cys-94, Cys-98, Cys-101, and Ser-308. Positions 80-297 (FNHGTATFMI…KAYADEIGFT (218 aa)) constitute a Radical SAM core domain.

It belongs to the radical SAM superfamily. Lipoyl synthase family. [4Fe-4S] cluster is required as a cofactor.

It is found in the cytoplasm. The enzyme catalyses [[Fe-S] cluster scaffold protein carrying a second [4Fe-4S](2+) cluster] + N(6)-octanoyl-L-lysyl-[protein] + 2 oxidized [2Fe-2S]-[ferredoxin] + 2 S-adenosyl-L-methionine + 4 H(+) = [[Fe-S] cluster scaffold protein] + N(6)-[(R)-dihydrolipoyl]-L-lysyl-[protein] + 4 Fe(3+) + 2 hydrogen sulfide + 2 5'-deoxyadenosine + 2 L-methionine + 2 reduced [2Fe-2S]-[ferredoxin]. It functions in the pathway protein modification; protein lipoylation via endogenous pathway; protein N(6)-(lipoyl)lysine from octanoyl-[acyl-carrier-protein]: step 2/2. Its function is as follows. Catalyzes the radical-mediated insertion of two sulfur atoms into the C-6 and C-8 positions of the octanoyl moiety bound to the lipoyl domains of lipoate-dependent enzymes, thereby converting the octanoylated domains into lipoylated derivatives. The chain is Lipoyl synthase from Pseudoalteromonas translucida (strain TAC 125).